Consider the following 250-residue polypeptide: Triosephosphate isomerase (250 aa).

A substrate-binding site is contributed by 9-11; that stretch reads NWK. Residue His96 is the Electrophile of the active site. Catalysis depends on Glu168, which acts as the Proton acceptor. Substrate-binding positions include Gly174, Ser216, and 237 to 238; that span reads GG.

This sequence belongs to the triosephosphate isomerase family. As to quaternary structure, homodimer.

It is found in the cytoplasm. The enzyme catalyses D-glyceraldehyde 3-phosphate = dihydroxyacetone phosphate. It participates in carbohydrate biosynthesis; gluconeogenesis. Its pathway is carbohydrate degradation; glycolysis; D-glyceraldehyde 3-phosphate from glycerone phosphate: step 1/1. Its function is as follows. Involved in the gluconeogenesis. Catalyzes stereospecifically the conversion of dihydroxyacetone phosphate (DHAP) to D-glyceraldehyde-3-phosphate (G3P). This Leptospira borgpetersenii serovar Hardjo-bovis (strain JB197) protein is Triosephosphate isomerase.